The sequence spans 971 residues: Sodium/calcium exchanger 1 (971 aa).

An N-terminal signal peptide occupies residues 1 to 32 (MLRLSLPPNVSMGFRLVTLVALLFTHVDHITA). Residues 33–71 (DTEAETGGNETTECTGSYYCKKGVILPIWEPQDPSFGDK) are Extracellular-facing. N-linked (GlcNAc...) asparagine glycosylation is present at asparagine 41. The chain crosses the membrane as a helical span at residues 72 to 92 (IARATVYFVAMVYMFLGVSII). Residues 93 to 133 (ADRFMSSIEVITSQEKEITIKKPNGETTKTTVRIWNETVSN) are Cytoplasmic-facing. Residues 134-154 (LTLMALGSSAPEILLSVIEVC) traverse the membrane as a helical segment. One copy of the Alpha-1 repeat lies at 138–178 (ALGSSAPEILLSVIEVCGHNFTAGDLGPSTIVGSAAFNMFI). The Extracellular portion of the chain corresponds to 155–167 (GHNFTAGDLGPST). N-linked (GlcNAc...) asparagine glycosylation is present at asparagine 157. A helical membrane pass occupies residues 168–188 (IVGSAAFNMFIIIALCVYVVP). Residues 189-201 (DGETRKIKHLRVF) lie on the Cytoplasmic side of the membrane. Residues 202–222 (FVTAAWSIFAYTWLYIILSVS) traverse the membrane as a helical segment. The Extracellular portion of the chain corresponds to 223 to 228 (SPGVVE). Residues 229 to 249 (VWEGLLTFFFFPICVVFAWVA) form a helical membrane-spanning segment. Topologically, residues 250-798 (DRRLLFYKYV…FVPPTEYWNG (549 aa)) are cytoplasmic. The segment at 251–270 (RRLLFYKYVYKRYRAGKQRG) is putative calmodulin-binding region. Phosphoserine occurs at positions 282 and 389. 2 Calx-beta domains span residues 393–493 (VNMD…VHLS) and 524–624 (ATIT…IEIG). 16 residues coordinate Ca(2+): glutamate 417, aspartate 453, aspartate 478, aspartate 479, isoleucine 481, glutamate 483, glutamate 486, aspartate 530, aspartate 531, aspartate 532, glutamate 548, aspartate 584, aspartate 610, glutamate 611, glutamate 612, and glutamate 716. Residues 799-819 (WACFIVSILMIGLLTAFIGDL) form a helical membrane-spanning segment. Residues 820 to 822 (ASH) are Extracellular-facing. The chain crosses the membrane as a helical span at residues 823-843 (FGCTIGLKDSVTAVVFVALGT). One copy of the Alpha-2 repeat lies at 840-876 (ALGTSVPDTFASKVAATQDQYADASIGNVTGSNAVNV). At 844 to 872 (SVPDTFASKVAATQDQYADASIGNVTGSN) the chain is on the cytoplasmic side. A helical membrane pass occupies residues 873 to 893 (AVNVFLGIGVAWSIAAIYHAA). The Extracellular segment spans residues 894–904 (NGEQFKVSPGT). The chain crosses the membrane as a helical span at residues 905–925 (LAFSVTLFTIFAFINVGVLLY). At 926 to 942 (RRRPEIGGELGGPRTAK) the chain is on the cytoplasmic side. The chain crosses the membrane as a helical span at residues 943–963 (LLTSSLFVLLWLLYIFFSSLE). Residues 964–971 (AYCHIKGF) are Extracellular-facing.

This sequence belongs to the Ca(2+):cation antiporter (CaCA) (TC 2.A.19) family. SLC8 subfamily. As to expression, detected in heart, brain cortex and hippocampus (at protein level). Cardiac sarcolemma or brain, and spleen. Expressed in all regions of the kidney, highest levels of expression in the distal convoluted tubule. Expressed throughout the CNS, in decreasing order of abundance in hippocampus, cortex, cerebellum, hypothalamus, midbrain and striatum. Expressed in numerous regions of the brain including multiple cortical layers, hippocampus, septal nuclei, thalamic nuclei, cerebellum, hypothalamus, olfactory bulb and brainstem. Also expressed in various regions of the spinal cord, ventricles and atria of the heart, lung, adrenals and kidney. Isoform 4 seems to be a predominant isoform in aorta, stomach, liver, and kidney.

The protein localises to the cell membrane. It is found in the cell projection. It localises to the dendrite. It catalyses the reaction Ca(2+)(in) + 3 Na(+)(out) = Ca(2+)(out) + 3 Na(+)(in). Activated by micromolar levels of Ca(2+). With respect to regulation, only active at low calcium concentrations. Not activated by PKC. Its activity is regulated as follows. Active at all calcium levels tested. Activated by PKC. Only active at low calcium concentrations. Activated by PKC. Functionally, mediates the exchange of one Ca(2+) ion against three to four Na(+) ions across the cell membrane, and thereby contributes to the regulation of cytoplasmic Ca(2+) levels and Ca(2+)-dependent cellular processes. Contributes to Ca(2+) transport during excitation-contraction coupling in muscle. In a first phase, voltage-gated channels mediate the rapid increase of cytoplasmic Ca(2+) levels due to release of Ca(2+) stores from the endoplasmic reticulum. SLC8A1 mediates the export of Ca(2+) from the cell during the next phase, so that cytoplasmic Ca(2+) levels rapidly return to baseline. Required for normal embryonic heart development and the onset of heart contractions. The chain is Sodium/calcium exchanger 1 (Slc8a1) from Rattus norvegicus (Rat).